Reading from the N-terminus, the 132-residue chain is Vesicle transport protein GOT1A (132 aa).

The Cytoplasmic portion of the chain corresponds to 1 to 16; that stretch reads MISITEWQKIGVGTTG. The helical transmembrane segment at 17–37 threads the bilayer; it reads FGIFFILFGMLLYFDSVLLAF. Residues 38–39 are Lumenal-facing; it reads GN. The helical transmembrane segment at 40-60 threads the bilayer; sequence LLFLTGLSLIIGLRRTFSFFF. Topologically, residues 61 to 68 are cytoplasmic; it reads QRHKFKGT. The helical transmembrane segment at 69–89 threads the bilayer; it reads SFFLGGVVIVLLRWPLLGMCL. Topologically, residues 90 to 100 are lumenal; that stretch reads ETYGFFSLFRG. A helical membrane pass occupies residues 101–121; that stretch reads FFPVAFGFLGSASNIPFLSAL. Residues 122 to 132 are Cytoplasmic-facing; sequence FQRLQGTSSMV.

The protein belongs to the GOT1 family.

Its subcellular location is the golgi apparatus membrane. Functionally, may be involved in fusion of ER-derived transport vesicles with the Golgi complex. In Bos taurus (Bovine), this protein is Vesicle transport protein GOT1A.